We begin with the raw amino-acid sequence, 257 residues long: Protein YIPF5 (257 aa).

The Cytoplasmic segment spans residues 1–124 (MSGFENLNTD…KVADGSIMNE (124 aa)). An interaction with Sec23 region spans residues 75–106 (PASPQPFYGNSFEDEPPLLEELGINFDHIWQK). The helical transmembrane segment at 125-145 (TDLAGPMVFCLAFGATLLLAG) threads the bilayer. Position 146 (Lys-146) is a topological domain, lumenal. The chain crosses the membrane as a helical span at residues 147 to 167 (IQFGYVYGISAIGCLGMFCLL). Topologically, residues 168 to 173 (NLMSMT) are cytoplasmic. Residues 174-194 (GVSFGCVASVLGYCLLPMILL) traverse the membrane as a helical segment. At 195–196 (SS) the chain is on the lumenal side. The chain crosses the membrane as a helical span at residues 197 to 217 (FAVIFSLQGMVGIILTAGIIG). The Cytoplasmic segment spans residues 218–236 (WCSFSASKIFISALAMEGQ). The chain crosses the membrane as a helical span at residues 237-257 (QLLVAYPCALLYGVFALISVF).

The protein belongs to the YIP1 family. In terms of assembly, interacts with the COPII coat components Sec23 (SEC23A and/or SEC23B) and Sec24 (SEC24A and/or SEC24B). Interacts with YIF1A. May interact with RAB1A. Interacts with YIPF3 and YIPF4.

It is found in the endoplasmic reticulum membrane. Its subcellular location is the golgi apparatus. The protein resides in the cis-Golgi network membrane. It localises to the cytoplasmic vesicle. The protein localises to the COPII-coated vesicle. Functionally, plays a role in transport between endoplasmic reticulum and Golgi. In pancreatic beta cells, required to transport proinsulin from endoplasmic reticulum into the Golgi. This chain is Protein YIPF5 (YIPF5), found in Macaca fascicularis (Crab-eating macaque).